The following is a 262-amino-acid chain: Ankyrin repeat domain-containing protein 7 (262 aa).

ANK repeat units follow at residues 67–96 (KYRTPLHLACANGHRDVVLFLIEQQCKINI), 100–129 (ENKSPLIKAVQCQNEDCATILLNCGADPNL), 133–162 (RYNTALHYAVCGQSFSLVEQLLDYEADLEA), 166–195 (DGYTPLLVAVINNNPKMVKFLLEKGADVNA), and 199–228 (YQRTALILAVSGEPTRLVKLLLQQGVELSC).

The protein is Ankyrin repeat domain-containing protein 7 (ANKRD7) of Macaca fascicularis (Crab-eating macaque).